Consider the following 617-residue polypeptide: Proline--tRNA ligase (617 aa).

It belongs to the class-II aminoacyl-tRNA synthetase family. ProS type 1 subfamily. Homodimer.

The protein localises to the cytoplasm. It catalyses the reaction tRNA(Pro) + L-proline + ATP = L-prolyl-tRNA(Pro) + AMP + diphosphate. Its function is as follows. Catalyzes the attachment of proline to tRNA(Pro) in a two-step reaction: proline is first activated by ATP to form Pro-AMP and then transferred to the acceptor end of tRNA(Pro). As ProRS can inadvertently accommodate and process non-cognate amino acids such as alanine and cysteine, to avoid such errors it has two additional distinct editing activities against alanine. One activity is designated as 'pretransfer' editing and involves the tRNA(Pro)-independent hydrolysis of activated Ala-AMP. The other activity is designated 'posttransfer' editing and involves deacylation of mischarged Ala-tRNA(Pro). The misacylated Cys-tRNA(Pro) is not edited by ProRS. This is Proline--tRNA ligase from Streptococcus pneumoniae serotype 4 (strain ATCC BAA-334 / TIGR4).